We begin with the raw amino-acid sequence, 331 residues long: tRNA (guanine-N(7)-)-methyltransferase (331 aa).

The S-adenosyl-L-methionine site is built by Glu29, Glu55, and Asp105. Residue Asp105 is part of the active site. Lys109 and Asp141 together coordinate substrate.

It belongs to the class I-like SAM-binding methyltransferase superfamily. TrmB family.

It carries out the reaction guanosine(46) in tRNA + S-adenosyl-L-methionine = N(7)-methylguanosine(46) in tRNA + S-adenosyl-L-homocysteine. It functions in the pathway tRNA modification; N(7)-methylguanine-tRNA biosynthesis. Functionally, catalyzes the formation of N(7)-methylguanine at position 46 (m7G46) in tRNA. The polypeptide is tRNA (guanine-N(7)-)-methyltransferase (Deinococcus geothermalis (strain DSM 11300 / CIP 105573 / AG-3a)).